A 343-amino-acid chain; its full sequence is tRNA-splicing endonuclease (343 aa).

Active-site residues include Tyr277, His288, and Lys319.

Belongs to the tRNA-intron endonuclease family. Archaeal long subfamily. As to quaternary structure, homodimer.

The enzyme catalyses pretRNA = a 3'-half-tRNA molecule with a 5'-OH end + a 5'-half-tRNA molecule with a 2',3'-cyclic phosphate end + an intron with a 2',3'-cyclic phosphate and a 5'-hydroxyl terminus.. Its function is as follows. Endonuclease that removes tRNA introns. Cleaves pre-tRNA at the 5' and 3' splice sites to release the intron. The products are an intron and two tRNA half-molecules bearing 2',3' cyclic phosphate and 5'-OH termini. Recognizes a pseudosymmetric substrate in which 2 bulged loops of 3 bases are separated by a stem of 4 bp. This is tRNA-splicing endonuclease from Halobacterium salinarum (strain ATCC 29341 / DSM 671 / R1).